The chain runs to 143 residues: Phospholipase A2 isozymes PA3A/PA3B/PA5 (143 aa).

The Ca(2+) site is built by tryptophan 10, glycine 12, and glycine 14. 3 disulfide bridges follow: cysteine 11-cysteine 33, cysteine 32-cysteine 72, and cysteine 39-cysteine 65. Histidine 36 is an active-site residue. Residue aspartate 37 coordinates Ca(2+).

The protein belongs to the phospholipase A2 family. Group III subfamily. It depends on Ca(2+) as a cofactor. As to expression, expressed by the venom gland.

The protein resides in the secreted. The catalysed reaction is a 1,2-diacyl-sn-glycero-3-phosphocholine + H2O = a 1-acyl-sn-glycero-3-phosphocholine + a fatty acid + H(+). In terms of biological role, PLA2 catalyzes the calcium-dependent hydrolysis of the 2-acyl groups in 3-sn-phosphoglycerides. The sequence is that of Phospholipase A2 isozymes PA3A/PA3B/PA5 from Heloderma suspectum (Gila monster).